The chain runs to 347 residues: Dolichyl-diphosphooligosaccharide--protein glycosyltransferase subunit TUSC3 (347 aa).

The signal sequence occupies residues Met1 to Gly41. At Gln42–Pro196 the chain is on the lumenal side. In terms of domain architecture, Thioredoxin spans Trp59 to Asp187. Asn83 carries an N-linked (GlcNAc...) asparagine glycan. A disulfide bond links Cys99 and Cys102. The chain crosses the membrane as a helical span at residues Asn197 to Leu217. At Arg218–Asn221 the chain is on the cytoplasmic side. Residues Leu222–Met242 traverse the membrane as a helical segment. Residues Thr243–Gln276 are Lumenal-facing. Residues Phe277–Leu297 traverse the membrane as a helical segment. The Cytoplasmic segment spans residues Leu298–Arg312. Residues Ile313–Phe333 form a helical membrane-spanning segment. Residues Arg334–Lys347 are Lumenal-facing.

This sequence belongs to the OST3/OST6 family. As to quaternary structure, accessory component of the STT3B-containing form of the oligosaccharyltransferase (OST) complex. OST exists in two different complex forms which contain common core subunits RPN1, RPN2, OST48, OST4, DAD1 and TMEM258, either STT3A or STT3B as catalytic subunits, and form-specific accessory subunits. OST can form stable complexes with the Sec61 complex or with both the Sec61 and TRAP complexes. The association of TUSC3 or MAGT1 with the STT3B-containing complex seems to be mutually exclusvice.

Its subcellular location is the endoplasmic reticulum membrane. It functions in the pathway protein modification; protein glycosylation. Acts as accessory component of the N-oligosaccharyl transferase (OST) complex which catalyzes the transfer of a high mannose oligosaccharide from a lipid-linked oligosaccharide donor to an asparagine residue within an Asn-X-Ser/Thr consensus motif in nascent polypeptide chains. Involved in N-glycosylation of STT3B-dependent substrates. Specifically required for the glycosylation of a subset of acceptor sites that are near cysteine residues; in this function seems to act redundantly with MAGT1. In its oxidized form proposed to form transient mixed disulfides with a glycoprotein substrate to facilitate access of STT3B to the unmodified acceptor site. Also has oxidoreductase-independent functions in the STT3B-containing OST complex possibly involving substrate recognition. Could indirectly play a role in Mg(2+) transport. The protein is Dolichyl-diphosphooligosaccharide--protein glycosyltransferase subunit TUSC3 (TUSC3) of Bos taurus (Bovine).